Consider the following 302-residue polypeptide: 33 kDa chaperonin (302 aa).

Cystine bridges form between C247–C249 and C280–C283.

The protein belongs to the HSP33 family. In terms of processing, under oxidizing conditions two disulfide bonds are formed involving the reactive cysteines. Under reducing conditions zinc is bound to the reactive cysteines and the protein is inactive.

The protein resides in the cytoplasm. Functionally, redox regulated molecular chaperone. Protects both thermally unfolding and oxidatively damaged proteins from irreversible aggregation. Plays an important role in the bacterial defense system toward oxidative stress. The protein is 33 kDa chaperonin of Prochlorococcus marinus (strain AS9601).